The sequence spans 105 residues: Phosphoribosyl-AMP cyclohydrolase (105 aa).

Residue Asp-72 coordinates Mg(2+). Cys-73 provides a ligand contact to Zn(2+). 2 residues coordinate Mg(2+): Asp-74 and Asp-76. The Zn(2+) site is built by Cys-89 and Cys-96.

The protein belongs to the PRA-CH family. Homodimer. Mg(2+) serves as cofactor. It depends on Zn(2+) as a cofactor.

Its subcellular location is the cytoplasm. The enzyme catalyses 1-(5-phospho-beta-D-ribosyl)-5'-AMP + H2O = 1-(5-phospho-beta-D-ribosyl)-5-[(5-phospho-beta-D-ribosylamino)methylideneamino]imidazole-4-carboxamide. Its pathway is amino-acid biosynthesis; L-histidine biosynthesis; L-histidine from 5-phospho-alpha-D-ribose 1-diphosphate: step 3/9. In terms of biological role, catalyzes the hydrolysis of the adenine ring of phosphoribosyl-AMP. The polypeptide is Phosphoribosyl-AMP cyclohydrolase (Listeria monocytogenes serotype 4a (strain HCC23)).